The chain runs to 640 residues: Threonine--tRNA ligase (640 aa).

The TGS domain maps to 1-61 (MPTITLPDGS…ENDASLQIIT (61 aa)). Residues 242-533 (DHRKIGKRLG…LIEHYEGAFP (292 aa)) form a catalytic region. The Zn(2+) site is built by Cys333, His384, and His510.

This sequence belongs to the class-II aminoacyl-tRNA synthetase family. In terms of assembly, homodimer. Zn(2+) serves as cofactor.

It localises to the cytoplasm. It carries out the reaction tRNA(Thr) + L-threonine + ATP = L-threonyl-tRNA(Thr) + AMP + diphosphate + H(+). Catalyzes the attachment of threonine to tRNA(Thr) in a two-step reaction: L-threonine is first activated by ATP to form Thr-AMP and then transferred to the acceptor end of tRNA(Thr). Also edits incorrectly charged L-seryl-tRNA(Thr). In Pseudomonas savastanoi pv. phaseolicola (strain 1448A / Race 6) (Pseudomonas syringae pv. phaseolicola (strain 1448A / Race 6)), this protein is Threonine--tRNA ligase.